The following is a 272-amino-acid chain: MDPYLLMWGLLTFITVPGCQAELCDDDPPKITHATFKAVAYKEGTMLNCECKRGFRRIKSGSPYMLCTGNSSHSSWDNQCQCTSSAARNTTKQVTPQPEEQKERKTTEMQSQMQLADQVSLPGHCREPPPWENEATERIYHFVVGQMVYYQCVQGYRALHRGPAESICKMTHGKTRWTQPQLICTGETEPSQFPGEEEPQASPDGLPESETSRLVTTTDFRIQTEVAATMETFIFTTEYQVAVAGCVFLLISVLLLSGLTWQRRQRKNRRTI.

The signal sequence occupies residues 1-21 (MDPYLLMWGLLTFITVPGCQA). One can recognise a Sushi 1 domain in the interval 22–84 (ELCDDDPPKI…SWDNQCQCTS (63 aa)). Residues 22-240 (ELCDDDPPKI…ETFIFTTEYQ (219 aa)) lie on the Extracellular side of the membrane. Cystine bridges form between C24/C67, C49/C80, and C51/C82. Residues N70 and N89 are each glycosylated (N-linked (GlcNAc...) asparagine). The segment covering 87-98 (ARNTTKQVTPQP) has biased composition (polar residues). The segment at 87–109 (ARNTTKQVTPQPEEQKERKTTEM) is disordered. Residues 123–186 (GHCREPPPWE…WTQPQLICTG (64 aa)) form the Sushi 2 domain. Disulfide bonds link C125–C168 and C152–C184. Residues 186-213 (GETEPSQFPGEEEPQASPDGLPESETSR) form a disordered region. Residues 241–259 (VAVAGCVFLLISVLLLSGL) traverse the membrane as a helical segment. Over 260–272 (TWQRRQRKNRRTI) the chain is Cytoplasmic.

In terms of assembly, non-covalent dimer of an alpha and a beta subunit. IL2R exists in 3 different forms: a high affinity dimer, an intermediate affinity monomer (beta subunit), and a low affinity monomer (alpha subunit). The high and intermediate affinity forms also associate with a gamma subunit.

The protein resides in the membrane. Its function is as follows. Receptor for interleukin-2. The receptor is involved in the regulation of immune tolerance by controlling regulatory T cells (TREGs) activity. TREGs suppress the activation and expansion of autoreactive T-cells. This Macaca mulatta (Rhesus macaque) protein is Interleukin-2 receptor subunit alpha (IL2RA).